We begin with the raw amino-acid sequence, 310 residues long: Homoserine kinase (310 aa).

91–101 (PIGSGLGSSAC) lines the ATP pocket.

The protein belongs to the GHMP kinase family. Homoserine kinase subfamily.

It is found in the cytoplasm. The catalysed reaction is L-homoserine + ATP = O-phospho-L-homoserine + ADP + H(+). It participates in amino-acid biosynthesis; L-threonine biosynthesis; L-threonine from L-aspartate: step 4/5. In terms of biological role, catalyzes the ATP-dependent phosphorylation of L-homoserine to L-homoserine phosphate. The sequence is that of Homoserine kinase from Escherichia coli (strain K12 / MC4100 / BW2952).